Reading from the N-terminus, the 884-residue chain is Lon protease homolog 2, peroxisomal (884 aa).

Positions 12 to 255 (LAILPFRNKV…KATELVDRHL (244 aa)) constitute a Lon N-terminal domain. A disordered region spans residues 67 to 101 (SLLSPGVGSDSGEGGSKAPGGSAGESTKQDTKNGK). Gly residues predominate over residues 75 to 89 (SDSGEGGSKAPGGSA). 408-415 (GPPGVGKT) serves as a coordination point for ATP. Residues 689–874 (VASPGVSVGL…EEVLDHAFEG (186 aa)) enclose the Lon proteolytic domain. Catalysis depends on residues Ser-780 and Lys-823. Residues 882-884 (SKL) carry the Microbody targeting signal motif.

The protein belongs to the peptidase S16 family. Expressed in roots, leaves and panicles.

The protein localises to the peroxisome matrix. The catalysed reaction is Hydrolysis of proteins in presence of ATP.. Its function is as follows. ATP-dependent serine protease that mediates the selective degradation of misfolded and unassembled polypeptides in the peroxisomal matrix. Necessary for type 2 peroxisome targeting signal (PTS2)-containing protein processing and facilitates peroxisome matrix protein import. This chain is Lon protease homolog 2, peroxisomal (LON1), found in Oryza sativa subsp. indica (Rice).